We begin with the raw amino-acid sequence, 730 residues long: MTIDGTGQSKEALQDERLNTGSDKVYQNYMMPALELYDAKVSINHWQLRDCIKPGSMNQSKLYYIYDHSIRVLDTDSSVLRSPVRRHNSIQPSNSGKNSTEKTSTKGSRTTGSYISKNLHVPSEKLVEFNFKPRCFTELNGLTVCGGLIGSDDKGFPSNWNRLAQDANISLPPPSQPINISKNISFPINSHYSNPNIWKGIVEFYNQETDTMMTFTLGQFINNCVTLYDRASMQFDLFACNNDGHLYQCDVSNRDVTLVKRYADLKFPLNNASLSHDGQTMVVSGDSNKFAVYNQNELTNQFSLHYDNHPSWGSSVNRVRRIPRFALPDESEYIENIYEAPNSDHGFYNSFSENDLQFATVFQNGTCAIYDIRNMATPMAEISSTRPHSHNGAFRVCRFSYGLDDLLFISEHQGRVHVVDTRNYVNHQVIVIPDKVNMEYINERKHNTNHNFTTNNNNENESNDSKNELQGADYRSLSRRRFSLPSMPNVTTEPWITMAQRIPKKYLEPQILPFPKVMDKISNESVLFSTKGSSSSDVAHPYKRRCSFRVRRVSTSAPTADYSNNNVNASLGTPAADSIATSSSNSAPQNLIDPLILSHQQASNDVFEDDEYYEAYNDVHSTYRVSSDYHGVSARAFESFLRPPSTPDLPSDDDNFAANSRNNRGTSNFLRRPVITTQESNEFSEENNISGIDWVEDRNGSSLIIGTDYGIMRWNINSWARRSFSSYDLC.

Phosphoserine is present on residues Ser82 and Ser89. 2 disordered regions span residues 82-114 (SPVRRHNSIQPSNSGKNSTEKTSTKGSRTTGSY) and 447-468 (NTNHNFTTNNNNENESNDSKNE). Residues 89–98 (SIQPSNSGKN) are compositionally biased toward polar residues. A compositionally biased stretch (low complexity) spans 449-460 (NHNFTTNNNNEN). Phosphoserine is present on residues Ser483 and Ser651.

This is an uncharacterized protein from Saccharomyces cerevisiae (strain ATCC 204508 / S288c) (Baker's yeast).